The chain runs to 384 residues: S-adenosylmethionine synthase (384 aa).

His15 contributes to the ATP binding site. Asp17 is a Mg(2+) binding site. K(+) is bound at residue Glu43. Glu56 and Gln99 together coordinate L-methionine. The interval 99–109 (QSPDINQGVDR) is flexible loop. ATP contacts are provided by residues 164 to 166 (DAK), 230 to 231 (RF), Asp239, 245 to 246 (RK), Ala262, and Lys266. Asp239 serves as a coordination point for L-methionine. Lys270 is an L-methionine binding site.

The protein belongs to the AdoMet synthase family. In terms of assembly, homotetramer; dimer of dimers. It depends on Mg(2+) as a cofactor. Requires K(+) as cofactor.

It localises to the cytoplasm. It catalyses the reaction L-methionine + ATP + H2O = S-adenosyl-L-methionine + phosphate + diphosphate. Its pathway is amino-acid biosynthesis; S-adenosyl-L-methionine biosynthesis; S-adenosyl-L-methionine from L-methionine: step 1/1. Catalyzes the formation of S-adenosylmethionine (AdoMet) from methionine and ATP. The overall synthetic reaction is composed of two sequential steps, AdoMet formation and the subsequent tripolyphosphate hydrolysis which occurs prior to release of AdoMet from the enzyme. The sequence is that of S-adenosylmethionine synthase from Erwinia tasmaniensis (strain DSM 17950 / CFBP 7177 / CIP 109463 / NCPPB 4357 / Et1/99).